A 474-amino-acid chain; its full sequence is tRNA (adenine(58)-N(1))-methyltransferase catalytic subunit trm61 (474 aa).

The tract at residues 75–109 is disordered; sequence DTGSRGRTQKMKRKADELDSSTQAEDKPSPQTPVA. Residues 163-165, Glu-197, Arg-202, 225-226, and Asp-250 each bind S-adenosyl-L-methionine; these read SGS and DV. 2 disordered regions span residues 356-390 and 423-474; these read LFRA…VPVY and DEKR…SQKE. Polar residues predominate over residues 358–367; the sequence is RATQNQSDGD. A compositionally biased stretch (basic and acidic residues) spans 423–432; the sequence is DEKRCREKWP. Residues 434 to 443 show a composition bias toward polar residues; sequence NRVQEPQGPQ. A compositionally biased stretch (basic and acidic residues) spans 450–474; the sequence is KRESREKRDLQRKEQSQPETESQKE.

Belongs to the class I-like SAM-binding methyltransferase superfamily. TRM61 family. Heterotetramer; composed of two copies of TRM6 and two copies of TRM61.

The protein localises to the nucleus. It carries out the reaction adenosine(58) in tRNA + S-adenosyl-L-methionine = N(1)-methyladenosine(58) in tRNA + S-adenosyl-L-homocysteine + H(+). Its function is as follows. Catalytic subunit of tRNA (adenine-N(1)-)-methyltransferase, which catalyzes the formation of N(1)-methyladenine at position 58 (m1A58) in initiator methionyl-tRNA. The polypeptide is tRNA (adenine(58)-N(1))-methyltransferase catalytic subunit trm61 (trm61) (Aspergillus oryzae (strain ATCC 42149 / RIB 40) (Yellow koji mold)).